A 145-amino-acid chain; its full sequence is [Ribosomal protein bS18]-alanine N-acetyltransferase (145 aa).

Positions 1-145 (MIETIVEQDF…ENAVIMALYL (145 aa)) constitute an N-acetyltransferase domain. 67–69 (LAV) is a binding site for acetyl-CoA. The active-site Proton acceptor is glutamate 101. Asparagine 106 provides a ligand contact to acetyl-CoA. Tyrosine 113 acts as the Proton donor in catalysis.

It belongs to the acetyltransferase family. RimI subfamily.

It localises to the cytoplasm. The enzyme catalyses N-terminal L-alanyl-[ribosomal protein bS18] + acetyl-CoA = N-terminal N(alpha)-acetyl-L-alanyl-[ribosomal protein bS18] + CoA + H(+). Functionally, acetylates the N-terminal alanine of ribosomal protein bS18. This chain is [Ribosomal protein bS18]-alanine N-acetyltransferase, found in Haemophilus ducreyi (strain 35000HP / ATCC 700724).